The primary structure comprises 216 residues: Nucleoside triphosphate pyrophosphatase (216 aa).

The active-site Proton acceptor is the Asp86.

Belongs to the Maf family. A divalent metal cation serves as cofactor.

The protein localises to the cytoplasm. It carries out the reaction a ribonucleoside 5'-triphosphate + H2O = a ribonucleoside 5'-phosphate + diphosphate + H(+). The enzyme catalyses a 2'-deoxyribonucleoside 5'-triphosphate + H2O = a 2'-deoxyribonucleoside 5'-phosphate + diphosphate + H(+). Its function is as follows. Nucleoside triphosphate pyrophosphatase. May have a dual role in cell division arrest and in preventing the incorporation of modified nucleotides into cellular nucleic acids. This chain is Nucleoside triphosphate pyrophosphatase, found in Dictyostelium discoideum (Social amoeba).